Reading from the N-terminus, the 402-residue chain is S-adenosylmethionine synthase (402 aa).

ATP is bound at residue His15. Mg(2+) is bound at residue Asp17. Glu43 contacts K(+). Glu56 and Gln99 together coordinate L-methionine. The flexible loop stretch occupies residues 99–109 (QSPDIAQGVDT). Residues 174–176 (DGK), 247–248 (RF), Asp256, 262–263 (RK), Ala279, and Lys283 each bind ATP. Residue Asp256 coordinates L-methionine. Lys287 contributes to the L-methionine binding site.

The protein belongs to the AdoMet synthase family. In terms of assembly, homotetramer; dimer of dimers. Mg(2+) serves as cofactor. It depends on K(+) as a cofactor.

It is found in the cytoplasm. The catalysed reaction is L-methionine + ATP + H2O = S-adenosyl-L-methionine + phosphate + diphosphate. It participates in amino-acid biosynthesis; S-adenosyl-L-methionine biosynthesis; S-adenosyl-L-methionine from L-methionine: step 1/1. In terms of biological role, catalyzes the formation of S-adenosylmethionine (AdoMet) from methionine and ATP. The overall synthetic reaction is composed of two sequential steps, AdoMet formation and the subsequent tripolyphosphate hydrolysis which occurs prior to release of AdoMet from the enzyme. The polypeptide is S-adenosylmethionine synthase (Streptomyces avermitilis (strain ATCC 31267 / DSM 46492 / JCM 5070 / NBRC 14893 / NCIMB 12804 / NRRL 8165 / MA-4680)).